We begin with the raw amino-acid sequence, 809 residues long: Glycerol-3-phosphate acyltransferase (809 aa).

The short motif at 306 to 311 is the HXXXXD motif element; sequence HRSHMD.

This sequence belongs to the GPAT/DAPAT family.

It is found in the cell inner membrane. The catalysed reaction is sn-glycerol 3-phosphate + an acyl-CoA = a 1-acyl-sn-glycero-3-phosphate + CoA. It functions in the pathway phospholipid metabolism; CDP-diacylglycerol biosynthesis; CDP-diacylglycerol from sn-glycerol 3-phosphate: step 1/3. This chain is Glycerol-3-phosphate acyltransferase, found in Vibrio vulnificus (strain YJ016).